The following is a 1219-amino-acid chain: ATP-dependent helicase/nuclease subunit A (1219 aa).

Positions threonine 12 to arginine 477 constitute a UvrD-like helicase ATP-binding domain. Alanine 33–threonine 40 contacts ATP. Residues glutamate 478–glycine 786 form the UvrD-like helicase C-terminal domain. The tract at residues proline 997–threonine 1016 is disordered. Over residues glutamate 1004–threonine 1016 the composition is skewed to basic and acidic residues.

The protein belongs to the helicase family. AddA subfamily. Heterodimer of AddA and AddB/RexB. Requires Mg(2+) as cofactor.

The catalysed reaction is Couples ATP hydrolysis with the unwinding of duplex DNA by translocating in the 3'-5' direction.. The enzyme catalyses ATP + H2O = ADP + phosphate + H(+). The heterodimer acts as both an ATP-dependent DNA helicase and an ATP-dependent, dual-direction single-stranded exonuclease. Recognizes the chi site generating a DNA molecule suitable for the initiation of homologous recombination. The AddA nuclease domain is required for chi fragment generation; this subunit has the helicase and 3' -&gt; 5' nuclease activities. In Staphylococcus saprophyticus subsp. saprophyticus (strain ATCC 15305 / DSM 20229 / NCIMB 8711 / NCTC 7292 / S-41), this protein is ATP-dependent helicase/nuclease subunit A.